Reading from the N-terminus, the 144-residue chain is Acidic phospholipase A2 S15-109 (144 aa).

An N-terminal signal peptide occupies residues 1–19; sequence MYPAHLLVLLAVCVSLLGA. Positions 20–27 are excised as a propeptide; it reads SDIPPQPL. 7 cysteine pairs are disulfide-bonded: C38–C98, C54–C143, C56–C72, C71–C126, C78–C119, C87–C112, and C105–C117. Residues Y55, G57, and G59 each contribute to the Ca(2+) site. H75 is an active-site residue. Residue D76 coordinates Ca(2+). Residue D120 is part of the active site.

This sequence belongs to the phospholipase A2 family. Group I subfamily. D49 sub-subfamily. Ca(2+) serves as cofactor. In terms of tissue distribution, expressed by the venom gland.

It localises to the secreted. The enzyme catalyses a 1,2-diacyl-sn-glycero-3-phosphocholine + H2O = a 1-acyl-sn-glycero-3-phosphocholine + a fatty acid + H(+). Snake venom phospholipase A2 (PLA2) that inhibits collagen-induced platelet aggregation. PLA2 catalyzes the calcium-dependent hydrolysis of the 2-acyl groups in 3-sn-phosphoglycerides. The chain is Acidic phospholipase A2 S15-109 from Austrelaps superbus (Lowland copperhead snake).